The sequence spans 416 residues: MSTKQITCRYFMHGVCREGSQCLFSHDLANSKPSTICKYYQKGYCAYGTRCRYDHTRPSAAAGGAVGTMAHSVPSPAFHSPHPPSEVTASIVKTNSHEPGKREKRTLVLRDRNLSGMAERKTQPSMVSNPGSCSDPQPSPEMKPHSYLDAIRSGLDDVEASSSYSNEQQLCPYAAAGECRFGDACVYLHGEVCEICRLQVLHPFDPEQRKAHEKICMLTFEHEMEKAFAFQASQDKVCSICMEVILEKASASERRFGILSNCNHTYCLSCIRQWRCAKQFENPIIKSCPECRVISEFVIPSVYWVEDQNKKNELIEAFKQGMGKKACKYFEQGKGTCPFGSKCLYRHAYPDGRLAEPEKPRKQLSSQGTVRFFNSVRLWDFIENRESRHVPNNEDVDMTELGDLFMHLSGVESSEP.

2 consecutive C3H1-type zinc fingers follow at residues 2–29 (STKQ…HDLA) and 31–58 (SKPS…HTRP). Positions 113–122 (NLSGMAERKT) are enriched in basic and acidic residues. Residues 113–142 (NLSGMAERKTQPSMVSNPGSCSDPQPSPEM) form a disordered region. Positions 123 to 136 (QPSMVSNPGSCSDP) are enriched in polar residues. Ser-139 is subject to Phosphoserine. A C3H1-type 3 zinc finger spans residues 165-192 (SNEQQLCPYAAAGECRFGDACVYLHGEV). The makorin-type Cys-His stretch occupies residues 193–222 (CEICRLQVLHPFDPEQRKAHEKICMLTFEH). The RING-type zinc finger occupies 238-292 (CSICMEVILEKASASERRFGILSNCNHTYCLSCIRQWRCAKQFENPIIKSCPECR). The C3H1-type 4 zinc-finger motif lies at 321-350 (GMGKKACKYFEQGKGTCPFGSKCLYRHAYP).

In terms of assembly, interacts with PDLIM2 (via LIM zinc-binding domain). Interacts with RELA. In terms of tissue distribution, expressed in sperm, with significantly reduced expression in sperm of patients with oligoasthenoteratozoospermia (at protein level). Widely expressed with expression in testis, ovary, small intestine, colon, peripheral blood leukocytes, fetal liver, bone marrow, thymus, lymph node and spleen.

The protein resides in the cytoplasm. The protein localises to the nucleus. The catalysed reaction is S-ubiquitinyl-[E2 ubiquitin-conjugating enzyme]-L-cysteine + [acceptor protein]-L-lysine = [E2 ubiquitin-conjugating enzyme]-L-cysteine + N(6)-ubiquitinyl-[acceptor protein]-L-lysine.. It participates in protein modification; protein ubiquitination. In terms of biological role, E3 ubiquitin ligase catalyzing the covalent attachment of ubiquitin moieties onto substrate proteins. Promotes the polyubiquitination and proteasome-dependent degradation of RELA/p65, thereby suppressing RELA-mediated NF-kappaB transactivation and negatively regulating inflammatory responses. Plays a role in the regulation of spermiation and in male fertility. This Homo sapiens (Human) protein is E3 ubiquitin-protein ligase makorin-2 (MKRN2).